The following is a 515-amino-acid chain: Tripartite motif-containing protein 5 (515 aa).

The residue at position 2 (Ala2) is an N-acetylalanine. The RING-type zinc-finger motif lies at 15–60 (CPICLELLTEPLSLPCGHSLCQACITANHKESMLYKEEERSCPVCR). The residue at position 87 (Ser87) is a Phosphoserine. The B box-type zinc-finger motif lies at 92-133 (QKVDHCARHGEKLLLFCQEDSKVICWLCERSQEHRGHHTFLM). Residues Cys97, His100, Cys119, and His125 each coordinate Zn(2+). The stretch at 137-225 (AQEYHVKLQT…LTKSETEMVQ (89 aa)) forms a coiled coil. The segment at 187 to 200 (FEQLREILDWEESN) is required for interaction with GABARAP and for autophagy. The B30.2/SPRY domain maps to 283-515 (LKGMLDMFRE…VPMTLCSPSS (233 aa)).

This sequence belongs to the TRIM/RBCC family. Can form homodimers and homotrimers. In addition to lower-order dimerization, also exhibits a higher-order multimerization and both low- and high-order multimerizations are essential for its restriction activity. Interacts with BTBD1 and BTBD2. Interacts with PSMC4, PSMC5, PSMD7 and HSPA8/HSC70. Interacts (via B30.2/SPRY domain) with HSPA1A/B. Interacts with PSMC2, MAP3K7/TAK1, TAB2 and TAB3. Interacts with SQSTM1. Interacts with TRIM6 and TRIM34. Interacts with ULK1 (phosphorylated form), GABARAP, GABARAPL1, GABARAPL2, MAP1LC3A, MAP1LC3C and BECN1. Post-translationally, degraded in a proteasome-independent fashion in the absence of viral infection but in a proteasome-dependent fashion following exposure to restriction sensitive virus. In terms of processing, autoubiquitinated in a RING finger- and UBE2D2-dependent manner. Monoubiquitinated by TRIM21. Deubiquitinated by Yersinia YopJ. Ubiquitination may not lead to proteasomal degradation.

Its subcellular location is the cytoplasm. The protein resides in the nucleus. It carries out the reaction S-ubiquitinyl-[E2 ubiquitin-conjugating enzyme]-L-cysteine + [acceptor protein]-L-lysine = [E2 ubiquitin-conjugating enzyme]-L-cysteine + N(6)-ubiquitinyl-[acceptor protein]-L-lysine.. It functions in the pathway protein modification; protein ubiquitination. Its function is as follows. Capsid-specific restriction factor that prevents infection from non-host-adapted retroviruses. Blocks viral replication early in the life cycle, after viral entry but before reverse transcription. In addition to acting as a capsid-specific restriction factor, also acts as a pattern recognition receptor that activates innate immune signaling in response to the retroviral capsid lattice. Binding to the viral capsid triggers its E3 ubiquitin ligase activity, and in concert with the heterodimeric ubiquitin conjugating enzyme complex UBE2V1-UBE2N (also known as UBC13-UEV1A complex) generates 'Lys-63'-linked polyubiquitin chains, which in turn are catalysts in the autophosphorylation of the MAP3K7/TAK1 complex (includes TAK1, TAB2, and TAB3). Activation of the MAP3K7/TAK1 complex by autophosphorylation results in the induction and expression of NF-kappa-B and MAPK-responsive inflammatory genes, thereby leading to an innate immune response in the infected cell. Restricts infection by human immunodeficiency virus type 1 (HIV-1) and N-tropic murine leukemia virus (N-MLV). Plays a role in regulating autophagy through activation of autophagy regulator BECN1 by causing its dissociation from its inhibitors BCL2 and TAB2. This chain is Tripartite motif-containing protein 5 (TRIM5), found in Chlorocebus pygerythrus (Vervet monkey).